The chain runs to 268 residues: Glucosamine-6-phosphate deaminase (268 aa).

Catalysis depends on Asp-67, which acts as the Proton acceptor; for enolization step. Asn-136 acts as the For ring-opening step in catalysis. His-138 (proton acceptor; for ring-opening step) is an active-site residue. Glu-143 functions as the For ring-opening step in the catalytic mechanism.

The protein belongs to the glucosamine/galactosamine-6-phosphate isomerase family. NagB subfamily. As to quaternary structure, homohexamer.

The enzyme catalyses alpha-D-glucosamine 6-phosphate + H2O = beta-D-fructose 6-phosphate + NH4(+). Its pathway is amino-sugar metabolism; N-acetylneuraminate degradation; D-fructose 6-phosphate from N-acetylneuraminate: step 5/5. Functionally, catalyzes the reversible isomerization-deamination of glucosamine 6-phosphate (GlcN6P) to form fructose 6-phosphate (Fru6P) and ammonium ion. In Shewanella loihica (strain ATCC BAA-1088 / PV-4), this protein is Glucosamine-6-phosphate deaminase.